A 285-amino-acid polypeptide reads, in one-letter code: NADPH-dependent 7-cyano-7-deazaguanine reductase (285 aa).

Position 80-82 (80-82 (VES)) interacts with substrate. 82–83 (SK) contributes to the NADPH binding site. Cys191 (thioimide intermediate) is an active-site residue. The Proton donor role is filled by Asp198. Residue 231 to 232 (HE) coordinates substrate. 260-261 (RG) serves as a coordination point for NADPH.

The protein belongs to the GTP cyclohydrolase I family. QueF type 2 subfamily. In terms of assembly, homodimer.

The protein resides in the cytoplasm. It carries out the reaction 7-aminomethyl-7-carbaguanine + 2 NADP(+) = 7-cyano-7-deazaguanine + 2 NADPH + 3 H(+). The protein operates within tRNA modification; tRNA-queuosine biosynthesis. Its function is as follows. Catalyzes the NADPH-dependent reduction of 7-cyano-7-deazaguanine (preQ0) to 7-aminomethyl-7-deazaguanine (preQ1). In Psychrobacter arcticus (strain DSM 17307 / VKM B-2377 / 273-4), this protein is NADPH-dependent 7-cyano-7-deazaguanine reductase.